Here is a 187-residue protein sequence, read N- to C-terminus: Small monomeric GTPase RhbA (187 aa).

Residues Ser17, Val18, Gly19, Lys20, Ser21, Ser22, Val33, and Glu34 each contribute to the GDP site. Ser17 contacts GTP. Gly19, Lys20, Ser21, Ser22, and Val33 together coordinate GTP. Residue Ser21 coordinates Mg(2+). Tyr36, Thr39, Asn120, Asp123, and Ala152 together coordinate GTP. Residues 36-44 (YYPTIENTF) carry the Effector region motif. Mg(2+) is bound at residue Thr39. GDP-binding residues include Asn120, Asp123, and Ala152. Residue Cys184 is the site of S-farnesyl cysteine attachment.

The protein belongs to the small GTPase superfamily. Rheb family. In terms of processing, farnesylation is important for efficiently activating mTORC1-mediated signaling.

The protein localises to the cell membrane. It carries out the reaction GTP + H2O = GDP + phosphate + H(+). Alternates between an inactive form bound to GDP and an active form bound to GTP. Its function is as follows. Small GTPase that acts as an allosteric activator of the canonical TOR pathway, an evolutionarily conserved central nutrient sensor that stimulates anabolic reactions and macromolecule biosynthesis to promote cellular biomass generation and growth. Plays a role in virulence. This chain is Small monomeric GTPase RhbA, found in Aspergillus fumigatus (strain ATCC MYA-4609 / CBS 101355 / FGSC A1100 / Af293) (Neosartorya fumigata).